The sequence spans 398 residues: Cytohesin-1 (398 aa).

M1 carries the N-acetylmethionine modification. A necessary for localization at adherens junction region spans residues 1–60; it reads MEDDDSYVPSDLTAEERQELENIRRRKQELLADIQRLKEEIAEVANEIESLGSTEERKNM. Positions 10–67 form a coiled coil; sequence SDLTAEERQELENIRRRKQELLADIQRLKEEIAEVANEIESLGSTEERKNMQRNKQVA. The region spanning 73–202 is the SEC7 domain; the sequence is FNMDPKKGIQ…IIMLNTSLHN (130 aa). A PH domain is found at 260-377; sequence NPDREGWLLK…WIKCIKAAIS (118 aa). A 1,2-diacyl-sn-glycero-3-phospho-(1D-myo-inositol-3,4,5-trisphosphate)-binding positions include 269 to 277, R281, Y292, R302, and N351; that span reads KLGGGRVKT. Positions 388 to 396 are C-terminal autoinhibitory region; the sequence is RKKKVSSTK.

Interacts with TRIM23 and CYTIP. Interacts (via coiled-coil domain) with FRMD4A (via coiled-coil domain). Interacts with FRMD4B. Found in a complex with PARD3, CYTH1 and FRMD4A. Interacts (via N-terminal domain) with INAVA (via N-terminal domain). In terms of processing, ubiquitinated by SCF(FBXW11) E3 ubiquitin-protein ligase complex. Ubiquitination induces proteasomal degradation. As to expression, expressed in colon and small intestine (at protein level).

The protein resides in the cell membrane. Its subcellular location is the cytoplasm. The protein localises to the cytosol. It localises to the cell junction. It is found in the tight junction. The protein resides in the adherens junction. Promotes guanine-nucleotide exchange on ARF1, ARF5 and ARF6. Promotes the activation of ARF factors through replacement of GDP with GTP. Plays an important role in membrane trafficking, during junctional remodeling and epithelial polarization, through regulation of ARF6 activity. This Mus musculus (Mouse) protein is Cytohesin-1 (Cyth1).